We begin with the raw amino-acid sequence, 141 residues long: Nucleoside triphosphatase NudI (141 aa).

Positions 1–141 (MRQRTIVCPL…RKTLRLKGLL (141 aa)) constitute a Nudix hydrolase domain. Positions 38-59 (GGVEPGERIEEALRREIREELG) match the Nudix box motif.

It belongs to the Nudix hydrolase family. NudI subfamily. As to quaternary structure, monomer. Requires Mg(2+) as cofactor.

It carries out the reaction a ribonucleoside 5'-triphosphate + H2O = a ribonucleoside 5'-phosphate + diphosphate + H(+). It catalyses the reaction a 2'-deoxyribonucleoside 5'-triphosphate + H2O = a 2'-deoxyribonucleoside 5'-phosphate + diphosphate + H(+). The enzyme catalyses dUTP + H2O = dUMP + diphosphate + H(+). The catalysed reaction is dTTP + H2O = dTMP + diphosphate + H(+). It carries out the reaction dCTP + H2O = dCMP + diphosphate + H(+). Catalyzes the hydrolysis of nucleoside triphosphates, with a preference for pyrimidine deoxynucleoside triphosphates (dUTP, dTTP and dCTP). The chain is Nucleoside triphosphatase NudI from Escherichia coli O17:K52:H18 (strain UMN026 / ExPEC).